Reading from the N-terminus, the 289-residue chain is 4-hydroxy-tetrahydrodipicolinate synthase (289 aa).

Residue Thr-43 coordinates pyruvate. Tyr-131 acts as the Proton donor/acceptor in catalysis. Lys-160 functions as the Schiff-base intermediate with substrate in the catalytic mechanism. Pyruvate is bound at residue Val-200.

This sequence belongs to the DapA family. As to quaternary structure, homotetramer; dimer of dimers.

Its subcellular location is the cytoplasm. It catalyses the reaction L-aspartate 4-semialdehyde + pyruvate = (2S,4S)-4-hydroxy-2,3,4,5-tetrahydrodipicolinate + H2O + H(+). The protein operates within amino-acid biosynthesis; L-lysine biosynthesis via DAP pathway; (S)-tetrahydrodipicolinate from L-aspartate: step 3/4. In terms of biological role, catalyzes the condensation of (S)-aspartate-beta-semialdehyde [(S)-ASA] and pyruvate to 4-hydroxy-tetrahydrodipicolinate (HTPA). This is 4-hydroxy-tetrahydrodipicolinate synthase from Methanococcus maripaludis (strain DSM 14266 / JCM 13030 / NBRC 101832 / S2 / LL).